We begin with the raw amino-acid sequence, 497 residues long: Probable cytosol aminopeptidase (497 aa).

The Mn(2+) site is built by Lys-267 and Asp-272. Residue Lys-279 is part of the active site. Positions 290, 349, and 351 each coordinate Mn(2+). Residue Arg-353 is part of the active site.

This sequence belongs to the peptidase M17 family. Mn(2+) serves as cofactor.

The protein resides in the cytoplasm. It carries out the reaction Release of an N-terminal amino acid, Xaa-|-Yaa-, in which Xaa is preferably Leu, but may be other amino acids including Pro although not Arg or Lys, and Yaa may be Pro. Amino acid amides and methyl esters are also readily hydrolyzed, but rates on arylamides are exceedingly low.. The enzyme catalyses Release of an N-terminal amino acid, preferentially leucine, but not glutamic or aspartic acids.. Its function is as follows. Presumably involved in the processing and regular turnover of intracellular proteins. Catalyzes the removal of unsubstituted N-terminal amino acids from various peptides. This is Probable cytosol aminopeptidase from Syntrophotalea carbinolica (strain DSM 2380 / NBRC 103641 / GraBd1) (Pelobacter carbinolicus).